The sequence spans 507 residues: ATP synthase subunit alpha, chloroplastic (507 aa).

Position 170–177 (170–177 (GDRQTGKT)) interacts with ATP.

Belongs to the ATPase alpha/beta chains family. F-type ATPases have 2 components, CF(1) - the catalytic core - and CF(0) - the membrane proton channel. CF(1) has five subunits: alpha(3), beta(3), gamma(1), delta(1), epsilon(1). CF(0) has four main subunits: a, b, b' and c.

It localises to the plastid. It is found in the chloroplast thylakoid membrane. The enzyme catalyses ATP + H2O + 4 H(+)(in) = ADP + phosphate + 5 H(+)(out). Produces ATP from ADP in the presence of a proton gradient across the membrane. The alpha chain is a regulatory subunit. The sequence is that of ATP synthase subunit alpha, chloroplastic from Nandina domestica (Heavenly bamboo).